The following is a 252-amino-acid chain: Phosphate import ATP-binding protein PstB (252 aa).

One can recognise an ABC transporter domain in the interval 6–247 (ITINNLNFYY…PRDKRTEDYI (242 aa)). 38 to 45 (GPSGCGKS) provides a ligand contact to ATP.

This sequence belongs to the ABC transporter superfamily. Phosphate importer (TC 3.A.1.7) family. In terms of assembly, the complex is composed of two ATP-binding proteins (PstB), two transmembrane proteins (PstC and PstA) and a solute-binding protein (PstS).

Its subcellular location is the cell membrane. It carries out the reaction phosphate(out) + ATP + H2O = ADP + 2 phosphate(in) + H(+). Part of the ABC transporter complex PstSACB involved in phosphate import. Responsible for energy coupling to the transport system. The protein is Phosphate import ATP-binding protein PstB of Moorella thermoacetica (strain ATCC 39073 / JCM 9320).